The following is a 166-amino-acid chain: 3-hydroxyacyl-[acyl-carrier-protein] dehydratase FabZ (166 aa).

His-72 is an active-site residue.

Belongs to the thioester dehydratase family. FabZ subfamily.

It localises to the cytoplasm. It carries out the reaction a (3R)-hydroxyacyl-[ACP] = a (2E)-enoyl-[ACP] + H2O. Functionally, involved in unsaturated fatty acids biosynthesis. Catalyzes the dehydration of short chain beta-hydroxyacyl-ACPs and long chain saturated and unsaturated beta-hydroxyacyl-ACPs. The chain is 3-hydroxyacyl-[acyl-carrier-protein] dehydratase FabZ from Synechococcus sp. (strain JA-3-3Ab) (Cyanobacteria bacterium Yellowstone A-Prime).